Consider the following 181-residue polypeptide: MNKTQQQLLINAIHTIPDYPVEGIMFRDVTSLLEDAEAFKLVMELLENKYKGRGFTKIVGTEARGFLFGAPLALALNIGFIPVRKPGKLPRPTYSQAYQLEYGEDILEIHQDALTPEDNVLIIDDLLATGGTIEATTKLIRRLGAQVQEAGFVISLPDLGGEERLAELNITPYSLIQYQGE.

The protein belongs to the purine/pyrimidine phosphoribosyltransferase family. As to quaternary structure, homodimer.

Its subcellular location is the cytoplasm. It carries out the reaction AMP + diphosphate = 5-phospho-alpha-D-ribose 1-diphosphate + adenine. It participates in purine metabolism; AMP biosynthesis via salvage pathway; AMP from adenine: step 1/1. Functionally, catalyzes a salvage reaction resulting in the formation of AMP, that is energically less costly than de novo synthesis. This Colwellia psychrerythraea (strain 34H / ATCC BAA-681) (Vibrio psychroerythus) protein is Adenine phosphoribosyltransferase.